Reading from the N-terminus, the 209-residue chain is Chaperone protein TorD (209 aa).

It belongs to the TorD/DmsD family. TorD subfamily.

It is found in the cytoplasm. Functionally, involved in the biogenesis of TorA. Acts on TorA before the insertion of the molybdenum cofactor and, as a result, probably favors a conformation of the apoenzyme that is competent for acquiring the cofactor. In Shewanella baltica (strain OS155 / ATCC BAA-1091), this protein is Chaperone protein TorD.